A 276-amino-acid polypeptide reads, in one-letter code: NH(3)-dependent NAD(+) synthetase (276 aa).

43-50 (GISGGVDS) contacts ATP. Aspartate 49 is a Mg(2+) binding site. Residue arginine 146 coordinates deamido-NAD(+). An ATP-binding site is contributed by threonine 166. Glutamate 171 provides a ligand contact to Mg(2+). 2 residues coordinate deamido-NAD(+): lysine 179 and aspartate 186. Positions 195 and 217 each coordinate ATP. 266–267 (HK) provides a ligand contact to deamido-NAD(+).

Belongs to the NAD synthetase family. Homodimer.

The enzyme catalyses deamido-NAD(+) + NH4(+) + ATP = AMP + diphosphate + NAD(+) + H(+). It functions in the pathway cofactor biosynthesis; NAD(+) biosynthesis; NAD(+) from deamido-NAD(+) (ammonia route): step 1/1. Catalyzes the ATP-dependent amidation of deamido-NAD to form NAD. Uses ammonia as a nitrogen source. The sequence is that of NH(3)-dependent NAD(+) synthetase from Shewanella pealeana (strain ATCC 700345 / ANG-SQ1).